We begin with the raw amino-acid sequence, 69 residues long: uncharacterized protein (69 aa).

This is an uncharacterized protein from Escherichia coli O157:H7.